Reading from the N-terminus, the 240-residue chain is Guanine nucleotide exchange factor sopE2 (240 aa).

Residues 78-240 are GEF catalytic domain; it reads LTSKTVKDFM…IANKYLQNAS (163 aa).

Belongs to the GEF (guanine exchange factor) SopE family.

It is found in the secreted. Activator for CDC42 by directly engaging this Rho GTPase and acting as potent guanine nucleotide exchange factor (GEF). This activation results in actin cytoskeleton rearrangements and stimulates membrane ruffling, promoting bacterial entry into non-phagocytic cells. Chaperone InvB is required for secretion, translocation and stabilization of intracellular levels of sopE2. The protein is Guanine nucleotide exchange factor sopE2 (sopE2) of Salmonella paratyphi A (strain ATCC 9150 / SARB42).